The sequence spans 201 residues: Small ribosomal subunit protein uS4c (201 aa).

Residues 1 to 14 (MSRYRGPRFKKIRR) show a composition bias toward basic residues. The disordered stretch occupies residues 1–44 (MSRYRGPRFKKIRRLGALPGLTSKRPRAGSDPRNQSRSGKKSQY). An S4 RNA-binding domain is found at 89–152 (MRLDNTLFRL…NSRTLVQNLL (64 aa)).

Belongs to the universal ribosomal protein uS4 family. As to quaternary structure, part of the 30S ribosomal subunit. Contacts protein S5. The interaction surface between S4 and S5 is involved in control of translational fidelity.

It localises to the plastid. Its subcellular location is the chloroplast. Functionally, one of the primary rRNA binding proteins, it binds directly to 16S rRNA where it nucleates assembly of the body of the 30S subunit. Its function is as follows. With S5 and S12 plays an important role in translational accuracy. The protein is Small ribosomal subunit protein uS4c (rps4) of Draba nemorosa (Woodland whitlowgrass).